The following is a 318-amino-acid chain: N-acyl-aromatic-L-amino acid amidohydrolase (carboxylate-forming) (318 aa).

The interval 1–210 (MSSLPGSREP…ILDFIELFNQ (210 aa)) is hydrolytic domain. The Zn(2+) site is built by H21 and E24. Residues R63 and 70–71 (NR) each bind substrate. Position 116 (H116) interacts with Zn(2+). E177 and Y287 together coordinate substrate. Residues 211–318 (GMDLPAFEMD…RLTPRSTQTP (108 aa)) are shielding domain. Position 317 is a phosphothreonine (T317).

The protein belongs to the AspA/AstE family. Aspartoacylase subfamily. As to quaternary structure, exists as a mixture of homodimers and homotetramer, both catalytically active. The cofactor is Zn(2+). As to expression, expressed predominantly in kidney and to a lesser extent in liver. Weakly expressed in heart, small intestine, brain, lung, testis, and stomach.

The protein localises to the apical cell membrane. It is found in the cytoplasm. The catalysed reaction is an N-acyl-aromatic L-alpha-amino acid + H2O = an aromatic L-alpha-amino acid + a carboxylate. The enzyme catalyses an N-acetyl-L-cysteine-S-conjugate + H2O = an S-substituted L-cysteine + acetate. In terms of biological role, plays an important role in deacetylating mercapturic acids in kidney proximal tubules. Also acts on N-acetyl-aromatic amino acids. In Mus musculus (Mouse), this protein is N-acyl-aromatic-L-amino acid amidohydrolase (carboxylate-forming) (Acy3).